A 480-amino-acid chain; its full sequence is O-acyltransferase ausP (480 aa).

Catalysis depends on proton acceptor residues histidine 180 and aspartate 412.

It belongs to the plant acyltransferase family. In terms of assembly, monomer.

It functions in the pathway secondary metabolite biosynthesis; terpenoid biosynthesis. Functionally, O-acyltransferase; part of the gene cluster that mediates the biosynthesis of calidodehydroaustin, a fungal meroterpenoid. The first step of the pathway is the synthesis of 3,5-dimethylorsellinic acid by the polyketide synthase ausA. 3,5-dimethylorsellinic acid is then prenylated by the polyprenyl transferase ausN. Further epoxidation by the FAD-dependent monooxygenase ausM and cyclization by the probable terpene cyclase ausL lead to the formation of protoaustinoid A. Protoaustinoid A is then oxidized to spiro-lactone preaustinoid A3 by the combined action of the FAD-binding monooxygenases ausB and ausC, and the dioxygenase ausE. Acid-catalyzed keto-rearrangement and ring contraction of the tetraketide portion of preaustinoid A3 by ausJ lead to the formation of preaustinoid A4. The aldo-keto reductase ausK, with the help of ausH, is involved in the next step by transforming preaustinoid A4 into isoaustinone which is in turn hydroxylated by the P450 monooxygenase ausI to form austinolide. The cytochrome P450 monooxygenase ausG modifies austinolide to austinol. Austinol is further acetylated to austin by the O-acetyltransferase ausP, which spontaneously changes to dehydroaustin. The cytochrome P450 monooxygenase ausR then converts dehydroaustin is into 7-dehydrodehydroaustin. The hydroxylation catalyzed by ausR permits the O-acetyltransferase ausQ to add an additional acetyl group to the molecule, leading to the formation of acetoxydehydroaustin. The short chain dehydrogenase ausT catalyzes the reduction of the double bond present between carbon atoms 1 and 2 to convert 7-dehydrodehydroaustin into 1,2-dihydro-7-hydroxydehydroaustin. AusQ catalyzes not only an acetylation reaction but also the addition of the PKS ausV diketide product to 1,2-dihydro-7-hydroxydehydroaustin, forming precalidodehydroaustin. Finally, the iron/alpha-ketoglutarate-dependent dioxygenase converts precalidodehydroaustin into calidodehydroaustin. The chain is O-acyltransferase ausP from Aspergillus calidoustus.